The following is a 472-amino-acid chain: Argininosuccinate lyase (472 aa).

It belongs to the lyase 1 family. Argininosuccinate lyase subfamily.

It localises to the cytoplasm. The catalysed reaction is 2-(N(omega)-L-arginino)succinate = fumarate + L-arginine. The protein operates within amino-acid biosynthesis; L-arginine biosynthesis; L-arginine from L-ornithine and carbamoyl phosphate: step 3/3. The sequence is that of Argininosuccinate lyase from Rhodococcus jostii (strain RHA1).